The sequence spans 1687 residues: Gag-Pol polyprotein (1687 aa).

Residue Gly2 is the site of N-myristoyl glycine; by host attachment. Disordered regions lie at residues 107 to 126 (GQDNGRKSAGGRPSAPSRLP), 136 to 195 (LLSE…STVA), 420 to 447 (HKRETEEEKQEREKKETEERERRRDRRQ), and 466 to 485 (GRQAGNLSNRAMRAPREGRP). The PTAP/PSAP motif signature appears at 108–111 (QDNG). Over residues 139-153 (EPPPYPTSPPPPPAP) the composition is skewed to pro residues. Residues 140-143 (PPPY) carry the PPXY motif motif. A coiled-coil region spans residues 408–453 (LQDLIKEAEKVYHKRETEEEKQEREKKETEERERRRDRRQEKNLTK). The CCHC-type zinc-finger motif lies at 490 to 507 (DQCAYCKERGHWARECPR). Positions 544–614 (TEFLVDTGAE…CPAPLLGRDL (71 aa)) constitute a Peptidase A2 domain. Asp549 functions as the Protease; shared with dimeric partner in the catalytic mechanism. Residues 721-912 (LDLGILVPCQ…EEVTYLGYLL (192 aa)) form the Reverse transcriptase domain. Residues Asp789, Asp863, Asp864, Asp1162, Glu1200, Asp1221, and Asp1291 each contribute to the Mg(2+) site. Positions 1153–1299 (LPGVPAWYTD…ADEAAKQAAQ (147 aa)) constitute an RNase H type-1 domain. The segment at 1339 to 1377 (HQLTHLGPDKLLQLVGRTSFHIPNLQSVVREITSKCQVC) adopts an HHCC-type zinc-finger fold. Residues 1394 to 1552 (RGDRPGVYWE…TPYEILHGGP (159 aa)) form the Integrase catalytic domain. 2 residues coordinate Mg(2+): Asp1405 and Asp1464.

Homohexamer; further associates as homomultimer. The virus core is composed of a lattice formed from hexagonal rings, each containing six capsid monomers. As to quaternary structure, interacts (via PPXY motif) with host NEDD4. Interacts (via PSAP motif) with host TSG101. In terms of assembly, the reverse transcriptase is a monomer (Potential). Interacts (via RNase domains) with host release factor ETF1; this interaction is essential for translational readthrough of amber codon between viral gag and pol genes, as well as for viral replication. Homodimer. Requires Mg(2+) as cofactor. Post-translationally, specific enzymatic cleavages by the viral protease yield mature proteins. The protease is released by autocatalytic cleavage. The polyprotein is cleaved during and after budding, this process is termed maturation. Phosphorylated on serine residues.

It is found in the virion. Its subcellular location is the host cell membrane. The protein resides in the host late endosome membrane. It localises to the host endosome. The protein localises to the host multivesicular body. It is found in the host cytoplasm. It catalyses the reaction DNA(n) + a 2'-deoxyribonucleoside 5'-triphosphate = DNA(n+1) + diphosphate. The enzyme catalyses Endonucleolytic cleavage to 5'-phosphomonoester.. Protease: Most efficiently inhibited by Amprenavir, which is able to block Gag-Pol processing in infected cells. Functionally, plays a role in budding and is processed by the viral protease during virion maturation outside the cell. During budding, it recruits, in a PPXY-dependent or independent manner, Nedd4-like ubiquitin ligases that conjugate ubiquitin molecules to Gag-Pol, or to Gag-Pol binding host factors. Interaction with HECT ubiquitin ligases probably links the viral protein to the host ESCRT pathway and facilitates release. Targets Gag and gag-pol polyproteins to the plasma membrane via a multipartite membrane binding signal, that includes its myristoylated N-terminus. Also mediates nuclear localization of the pre-integration complex. In terms of biological role, constituent of the pre-integration complex (PIC) which tethers the latter to mitotic chromosomes. This allows the integration of the viral genome into the host DNA. Its function is as follows. Forms the spherical core of the virion that encapsulates the genomic RNA-nucleocapsid complex. Functionally, involved in the packaging and encapsidation of two copies of the genome. Binds with high affinity to conserved UCUG elements within the packaging signal, located near the 5'-end of the genome. This binding is dependent on genome dimerization. Acts as a nucleic acid chaperone which is involved in rearrangement of nucleic acid secondary structures during gRNA retrotranscription. Protease: The aspartyl protease mediates proteolytic cleavages of Gag and Gag-Pol polyproteins during or shortly after the release of the virion from the plasma membrane. Cleavages take place as an ordered, step-wise cascade to yield mature proteins. This process is called maturation. Displays maximal activity during the budding process just prior to particle release from the cell. In terms of biological role, reverse transcriptase/ribonuclease H: RT is a multifunctional enzyme that converts the viral dimeric RNA genome into dsDNA in the cytoplasm, shortly after virus entry into the cell. This enzyme displays a DNA polymerase activity that can copy either DNA or RNA templates, and a ribonuclease H (RNase H) activity that cleaves the RNA strand of RNA-DNA heteroduplexes in a partially processive 3' to 5' endonucleasic mode. Conversion of viral genomic RNA into dsDNA requires many steps. A tRNA binds to the primer-binding site (PBS) situated at the 5' end of the viral RNA. RT uses the 3' end of the tRNA primer to perform a short round of RNA-dependent minus-strand DNA synthesis. The reading proceeds through the U5 region and ends after the repeated (R) region which is present at both ends of viral RNA. The portion of the RNA-DNA heteroduplex is digested by the RNase H, resulting in a ssDNA product attached to the tRNA primer. This ssDNA/tRNA hybridizes with the identical R region situated at the 3' end of viral RNA. This template exchange, known as minus-strand DNA strong stop transfer, can be either intra- or intermolecular. RT uses the 3' end of this newly synthesized short ssDNA to perform the RNA-dependent minus-strand DNA synthesis of the whole template. RNase H digests the RNA template except for a polypurine tract (PPT) situated at the 5' end of the genome. It is not clear if both polymerase and RNase H activities are simultaneous. RNase H probably can proceed both in a polymerase-dependent (RNA cut into small fragments by the same RT performing DNA synthesis) and a polymerase-independent mode (cleavage of remaining RNA fragments by free RTs). Secondly, RT performs DNA-directed plus-strand DNA synthesis using the PPT that has not been removed by RNase H as primers. PPT and tRNA primers are then removed by RNase H. The 3' and 5' ssDNA PBS regions hybridize to form a circular dsDNA intermediate. Strand displacement synthesis by RT to the PBS and PPT ends produces a blunt ended, linear dsDNA copy of the viral genome that includes long terminal repeats (LTRs) at both ends. Its function is as follows. Catalyzes viral DNA integration into the host chromosome, by performing a series of DNA cutting and joining reactions. This enzyme activity takes place after virion entry into a cell and reverse transcription of the RNA genome in dsDNA. The first step in the integration process is 3' processing. This step requires a complex comprising the viral genome, matrix protein and integrase. This complex is called the pre-integration complex (PIC). The integrase protein removes 2 nucleotides from each 3' end of the viral DNA, leaving recessed CA OH's at the 3' ends. In the second step that requires cell division, the PIC enters cell nucleus. In the third step, termed strand transfer, the integrase protein joins the previously processed 3' ends to the 5' ends of strands of target cellular DNA at the site of integration. The last step is viral DNA integration into host chromosome. The chain is Gag-Pol polyprotein (pro-pol) from Phascolarctos cinereus (Koala).